A 118-amino-acid chain; its full sequence is UPF0212 protein HQ_2663A (118 aa).

This sequence belongs to the UPF0212 family.

The protein is UPF0212 protein HQ_2663A of Haloquadratum walsbyi (strain DSM 16790 / HBSQ001).